Consider the following 689-residue polypeptide: Shutoff protein (689 aa).

The disordered stretch occupies residues 1–24; sequence MSEEPVSGTTVEIEEDTHTPPNSP. The binding to host EIF4G stretch occupies residues 226-289; it reads VMNNLLVKRA…SVLVTVVLEC (64 aa). Residues 292-410 form the RRM domain; it reads RLFTSKDMVK…PLYTETSQRL (119 aa). Phosphotyrosine; by host is present on residues Tyr309 and Tyr627. Positions 625 to 689 are disordered; that stretch reads GQYLDPHTGE…GEPDVRGTTS (65 aa). Over residues 645 to 655 the composition is skewed to basic and acidic residues; the sequence is SGHEFQGDGRH. Basic residues predominate over residues 656-675; the sequence is REPKRGRHFRQRGGPRKPPR. Residues 678–689 show a composition bias toward basic and acidic residues; that stretch reads AGGEPDVRGTTS.

The protein belongs to the adenoviridae shutoff protein family. Monomer. Interacts with hexon protein; this interaction allows chaperoning and trimerization of hexon proteins. Interacts (via N-terminus) with host initiation factor EIF4G (via C-terminus). Interacts (via RRM domain) with viral mRNAs that contain the tripartite leader; this interaction allows ribosome shunting and expression of viral late mRNAs. In terms of processing, might be cleaved by the viral protease. Phosphorylated. Tyrosine phosphorylation enhances preferential binding to tripartite leader mRNAs and allows ribosome shunting. Post-translationally, methylated. Asymmetric dimethylation by host PRMT1 of the Arg/Gly-rich region may regulate shutoff protein binding to hexon and promote the capsid assembly in the nucleus.

It localises to the host cytoplasm. Functionally, protein that inhibits host translation while promoting late viral translation by ribosome shunting. Blocks host cap-dependent translation by binding to eIF4G, displacing MKNK1 from cap initiation complexes and preventing EIF4E phosphorylation. Binds to the tripartite leader sequence of viral late mRNAs and recruits host eIF4G, PABPC1/poly-A binding protein and 40S ribosomes subunits on viral mRNAs, allowing ribosome shunting and efficient translation of late viral mRNAs even though conventional translation via ribosome scanning from the cap has been shut off in the host cell. During assembly, acts as a chaperone protein that helps hexon proteins assembly into trimers. The polypeptide is Shutoff protein (Canis lupus familiaris (Dog)).